The sequence spans 66 residues: Large ribosomal subunit protein bL35 (66 aa).

The protein belongs to the bacterial ribosomal protein bL35 family.

The chain is Large ribosomal subunit protein bL35 from Treponema denticola (strain ATCC 35405 / DSM 14222 / CIP 103919 / JCM 8153 / KCTC 15104).